Consider the following 118-residue polypeptide: DNA-binding protein Msm_0708 (118 aa).

A disordered region spans residues 16-39; sequence EARQAAAQGQMQQQAQQQMQQQEA. Residues 18–39 are compositionally biased toward low complexity; that stretch reads RQAAAQGQMQQQAQQQMQQQEA.

The protein belongs to the PDCD5 family.

In Methanobrevibacter smithii (strain ATCC 35061 / DSM 861 / OCM 144 / PS), this protein is DNA-binding protein Msm_0708.